The chain runs to 363 residues: MGDQPFIPPPQQTALTVNDHDEVTVWNAAPCPMLPRDQVYVRVEAVAINPSDTKMRGQFATPWAFLGTDYAGTVVAVGSDVTHIQVGDRVYGAQNEMCPRTPDQGAFSQYTVTRGRVWAKIPKGLSFEQAAALPAGISTAGLAMKLLGLPLPSPSADQPPTHSKPVYVLVYGGSTATATVTMQMLRLSGYIPIATCSPHNFDLAKSRGAEEVFDYRAPNLAQTIRTYTKNNLRYALDCITNVESTTFCFAAIGRAGGHYVSLNPFPEHAATRKMVTTDWTLGPTIFGEGSTWPAPYGRPGSEEERQFGEDLWRIAGQLVEDGRLVHHPLRVVQGGFDHIKQGMELVRKGELSGEKLVVRLEGP.

Residues 51 to 54, 174 to 177, 197 to 200, Tyr215, 262 to 263, Thr280, and 351 to 352 each bind NADP(+); these read SDTK, STAT, SPHN, LN, and LS. The segment at 226-272 is lovB-binding; it reads TYTKNNLRYALDCITNVESTTFCFAAIGRAGGHYVSLNPFPEHAATR.

This sequence belongs to the zinc-containing alcohol dehydrogenase family. Each MAT domain from the lovB homodimer binds one lovC molecule to form the final active lovB-lovC megasynthase complex.

The enzyme catalyses holo-[lovastatin nonaketide synthase] + 9 malonyl-CoA + S-adenosyl-L-methionine + 11 NADPH + 19 H(+) = dihydromonacolin L-[lovastatin nonaketide synthase] + S-adenosyl-L-homocysteine + 9 CO2 + 11 NADP(+) + 9 CoA + 6 H2O. It functions in the pathway polyketide biosynthesis; lovastatin biosynthesis. Its function is as follows. Trans-enoyl reductase; part of the gene cluster that mediates the biosynthesis of lovastatin (also known as mevinolin, mevacor or monacolin K), a hypolipidemic inhibitor of (3S)-hydroxymethylglutaryl-coenzyme A (HMG-CoA) reductase (HMGR). The first step in the biosynthesis of lovastatin is the production of dihydromonacolin L acid (DML) by the lovastatin nonaketide synthase lovB and the trans-acting enoyl reductase lovC (called the lovB-lovC megasynthase complex) via condensation of one acetyl-CoA unit and 8 malonyl-CoA units. The formation of the LovB/C complex is essential for the integrity of the catalytic chamber to the complete total synthesis of DML acid. Dihydromonacolin L acid is released from lovB by the thioesterase lovG. Next, dihydromonacolin L acid is oxidized by the dihydromonacolin L monooxygenase lovA twice to form monacolin J acid. The 2-methylbutyrate moiety of lovastatin is synthesized by the lovastatin diketide synthase lovF via condensation of one acetyl-CoA unit and one malonyl-CoA unit. Finally, the covalent attachment of this moiety to monacolin J acid is catalyzed by the transesterase lovD to yield lovastatin. LovD has broad substrate specificity and can also convert monacolin J to simvastatin using alpha-dimethylbutanoyl-S-methyl-3-mercaptopropionate (DMB-S-MMP) as the thioester acyl donor, and can also catalyze the reverse reaction and function as hydrolase in vitro. LovD has much higher activity with LovF-bound 2-methylbutanoate than with free diketide substrates. This chain is Lovastatin nonaketide synthase, enoyl reductase component lovC, found in Aspergillus terreus.